A 223-amino-acid polypeptide reads, in one-letter code: uncharacterized protein (223 aa).

Residues 117-148 (THAHTHAHTHGHTHTRAHSTHAHTHAHSHYHT) are disordered.

This is an uncharacterized protein from Homo sapiens (Human).